The primary structure comprises 225 residues: Thymidylate kinase (225 aa).

ATP is bound at residue 12–19; it reads GGEGAGKS.

This sequence belongs to the thymidylate kinase family.

It carries out the reaction dTMP + ATP = dTDP + ADP. Functionally, phosphorylation of dTMP to form dTDP in both de novo and salvage pathways of dTTP synthesis. The sequence is that of Thymidylate kinase from Chelativorans sp. (strain BNC1).